Consider the following 239-residue polypeptide: Ribonuclease 3 (239 aa).

Residues 18 to 141 enclose the RNase III domain; sequence YTTLEKALGY…LMAGVYLEAG (124 aa). Mg(2+) is bound at residue Glu-54. Residue Asp-58 is part of the active site. Ser-127 and Glu-130 together coordinate Mg(2+). Glu-130 is an active-site residue. The 70-residue stretch at 168–237 folds into the DRBM domain; it reads DYKTALQELT…AYYALQKLKE (70 aa).

Belongs to the ribonuclease III family. Homodimer. It depends on Mg(2+) as a cofactor.

The protein resides in the cytoplasm. It carries out the reaction Endonucleolytic cleavage to 5'-phosphomonoester.. Digests double-stranded RNA. Involved in the processing of primary rRNA transcript to yield the immediate precursors to the large and small rRNAs (23S and 16S). Processes some mRNAs, and tRNAs when they are encoded in the rRNA operon. Processes pre-crRNA and tracrRNA of type II CRISPR loci if present in the organism. In Helicobacter pylori (strain G27), this protein is Ribonuclease 3.